We begin with the raw amino-acid sequence, 1038 residues long: Probable ubiquitin conjugation factor E4 (1038 aa).

Disordered regions lie at residues 430-459 (ANDAGRENGNESRLLQSKEATSSSSNASGQ) and 1010-1038 (SHQSKKRTSGEDSSNKERIQTTNSDMLID). Residues 446 to 459 (SKEATSSSSNASGQ) show a composition bias toward low complexity. The region spanning 940–1014 (EIPDEFLDPI…DEFVKSHQSK (75 aa)) is the U-box domain. The span at 1017–1028 (TSGEDSSNKERI) shows a compositional bias: basic and acidic residues. Residues 1029 to 1038 (QTTNSDMLID) show a composition bias toward polar residues.

The protein belongs to the ubiquitin conjugation factor E4 family.

It is found in the cytoplasm. The protein localises to the nucleus. It catalyses the reaction S-ubiquitinyl-[E2 ubiquitin-conjugating enzyme]-L-cysteine + [acceptor protein]-L-lysine = [E2 ubiquitin-conjugating enzyme]-L-cysteine + N(6)-ubiquitinyl-[acceptor protein]-L-lysine.. Its pathway is protein modification; protein ubiquitination. Its function is as follows. Ubiquitin-protein ligase that may function as an E3 ligase in conjunction with specific E1 and E2 ligases. May also function as an E4 ligase mediating the assembly of polyubiquitin chain assembly on substrates monoubiquitinated by another E3 ubiquitin ligase. In Arabidopsis thaliana (Mouse-ear cress), this protein is Probable ubiquitin conjugation factor E4 (PUB1).